Consider the following 368-residue polypeptide: Chaperone protein DnaJ (368 aa).

Positions 5-69 (DYYEVLGVAR…NQRARYDQFG (65 aa)) constitute a J domain. The CR-type zinc finger occupies 125 to 207 (GVEKVITIPV…CRGAGRVRKN (83 aa)). Zn(2+)-binding residues include cysteine 138, cysteine 141, cysteine 155, cysteine 158, cysteine 181, cysteine 184, cysteine 195, and cysteine 198. CXXCXGXG motif repeat units follow at residues 138-145 (CGTCHGSG), 155-162 (CKRCGGSG), 181-188 (CSTCHGRG), and 195-202 (CETCRGAG).

This sequence belongs to the DnaJ family. Homodimer. Zn(2+) serves as cofactor.

It is found in the cytoplasm. Participates actively in the response to hyperosmotic and heat shock by preventing the aggregation of stress-denatured proteins and by disaggregating proteins, also in an autonomous, DnaK-independent fashion. Unfolded proteins bind initially to DnaJ; upon interaction with the DnaJ-bound protein, DnaK hydrolyzes its bound ATP, resulting in the formation of a stable complex. GrpE releases ADP from DnaK; ATP binding to DnaK triggers the release of the substrate protein, thus completing the reaction cycle. Several rounds of ATP-dependent interactions between DnaJ, DnaK and GrpE are required for fully efficient folding. Also involved, together with DnaK and GrpE, in the DNA replication of plasmids through activation of initiation proteins. The chain is Chaperone protein DnaJ from Exiguobacterium sibiricum (strain DSM 17290 / CCUG 55495 / CIP 109462 / JCM 13490 / 255-15).